A 595-amino-acid chain; its full sequence is Aspartate--tRNA(Asp/Asn) ligase (595 aa).

Glu-177 contributes to the L-aspartate binding site. The tract at residues 201-204 (QQFK) is aspartate. Arg-223 is a binding site for L-aspartate. ATP-binding positions include 223-225 (RDE) and Gln-232. Position 455 (His-455) interacts with L-aspartate. ATP is bound at residue Glu-489. Residue Arg-496 participates in L-aspartate binding. 542-545 (GLDR) serves as a coordination point for ATP.

The protein belongs to the class-II aminoacyl-tRNA synthetase family. Type 1 subfamily. As to quaternary structure, homodimer.

Its subcellular location is the cytoplasm. The enzyme catalyses tRNA(Asx) + L-aspartate + ATP = L-aspartyl-tRNA(Asx) + AMP + diphosphate. Aspartyl-tRNA synthetase with relaxed tRNA specificity since it is able to aspartylate not only its cognate tRNA(Asp) but also tRNA(Asn). Reaction proceeds in two steps: L-aspartate is first activated by ATP to form Asp-AMP and then transferred to the acceptor end of tRNA(Asp/Asn). This Opitutus terrae (strain DSM 11246 / JCM 15787 / PB90-1) protein is Aspartate--tRNA(Asp/Asn) ligase.